The following is a 344-amino-acid chain: Uroporphyrinogen decarboxylase (344 aa).

Substrate is bound by residues 26–30 (RQAGR), Asp76, Tyr151, Ser206, and His321.

This sequence belongs to the uroporphyrinogen decarboxylase family. As to quaternary structure, homodimer.

It localises to the cytoplasm. It carries out the reaction uroporphyrinogen III + 4 H(+) = coproporphyrinogen III + 4 CO2. It functions in the pathway porphyrin-containing compound metabolism; protoporphyrin-IX biosynthesis; coproporphyrinogen-III from 5-aminolevulinate: step 4/4. Catalyzes the decarboxylation of four acetate groups of uroporphyrinogen-III to yield coproporphyrinogen-III. The polypeptide is Uroporphyrinogen decarboxylase (Sinorhizobium fredii (strain NBRC 101917 / NGR234)).